Consider the following 473-residue polypeptide: UDP-glycosyltransferase 71B1 (473 aa).

The Proton acceptor role is filled by histidine 15. Residue histidine 15 participates in an anthocyanidin binding. The active-site Charge relay is the aspartate 110. Threonine 132, alanine 342, glutamine 344, histidine 359, tryptophan 362, asparagine 363, serine 364, and glutamate 367 together coordinate UDP-alpha-D-glucose. Alanine 382 contributes to the an anthocyanidin binding site. Positions 383 and 384 each coordinate UDP-alpha-D-glucose.

Belongs to the UDP-glycosyltransferase family.

The enzyme catalyses a flavonol + UDP-alpha-D-glucose = a flavonol 3-O-beta-D-glucoside + UDP + H(+). Functionally, possesses quercetin 3-O-glucosyltransferase activity in vitro. Also active in vitro on benzoates and benzoate derivatives. This chain is UDP-glycosyltransferase 71B1 (UGT71B1), found in Arabidopsis thaliana (Mouse-ear cress).